The following is a 75-amino-acid chain: Gas vesicle protein S (75 aa).

It belongs to the gas vesicle GvpA family.

Its subcellular location is the gas vesicle. In terms of biological role, probably a minor component of the gas vesicle. Gas vesicles are hollow, gas filled proteinaceous nanostructures found in some microorganisms. It is not clear what function gas vesicles perform in soil bacteria. This chain is Gas vesicle protein S, found in Streptomyces sp. (strain CB03234).